We begin with the raw amino-acid sequence, 1321 residues long: Indole-3-acetaldehyde oxidase (1321 aa).

The 90-residue stretch at 1–90 folds into the 2Fe-2S ferredoxin-type domain; sequence MSLVFAINGQ…HCNITTSEGL (90 aa). Residues cysteine 42, cysteine 47, and cysteine 50 each contribute to the [2Fe-2S] cluster site. An FAD-binding PCMH-type domain is found at 215–404; sequence VDSGMYRWCS…LSIEIPFWHS (190 aa).

Belongs to the xanthine dehydrogenase family. As to quaternary structure, aldehyde oxidases (AO) are homodimers and heterodimers of AO subunits. AO-beta is a AAO1-AAO2 heterodimer; AO-gamma is a AAO2 homodimer. AAO2 also forms a dimer with AAO3. Requires [2Fe-2S] cluster as cofactor. The cofactor is FAD. Mo-molybdopterin is required as a cofactor. In terms of tissue distribution, weakly expressed in roots, leaves and seedlings. In seedlings, mostly expressed in lower part of hypocotyls. Detectable in seeds and mature siliques at low levels.

The protein localises to the cytoplasm. It carries out the reaction indole-3-acetaldehyde + O2 + H2O = (indol-3-yl)acetate + H2O2 + H(+). Its activity is regulated as follows. Strongly inhibited by iodoacetate, potassium cyanide (KCN), 2-mercaptoethanol, dithiothreitol (DTT), p-chloromercuribenzoate, menadione and estradiol. Weakly inhibited by 4'-(9-acridinylamino)methanesulfon-m-anisidine (mAMSA) and tritonX-100. Not affected by allopurinol. Its function is as follows. In higher plant aldehyde oxidases (AO) appear to be homo- and heterodimeric assemblies of AO subunits with probably different physiological functions. In vitro, AO-gamma uses heptaldehyde, benzaldehyde, naphthaldehyde and cinnamaldehyde as substrates; AO-beta uses indole-3-acetaldehyde (IAAld), indole-3-aldehyde (IAld) and naphtaldehyde; the AAO2-AAO3 dimer uses abscisic aldehyde. The polypeptide is Indole-3-acetaldehyde oxidase (AAO2) (Arabidopsis thaliana (Mouse-ear cress)).